The primary structure comprises 320 residues: GRAM domain-containing protein 2A (320 aa).

Residues 33-56 (TEKPGKVQEPPDDGSLHWSEGSKG) are disordered. A GRAM domain is found at 74-141 (QQYHKLFKDI…VSVQLIKKHK (68 aa)). A helical transmembrane segment spans residues 278–298 (LLKVIFVMICFLVLSSSYLAF).

Post-translationally, phosphorylated.

The protein resides in the endoplasmic reticulum membrane. It localises to the cell membrane. Participates in the organization ofendoplasmic reticulum-plasma membrane contact sites (EPCS) with pleiotropic functions including STIM1 recruitment and calcium homeostasis. Constitutive tether that co-localize with ESYT2/3 tethers at endoplasmic reticulum-plasma membrane contact sites in a phosphatidylinositol lipid-dependent manner. Pre-marks the subset of phosphtidylinositol 4,5-biphosphate (PI(4,5)P2)-enriched EPCS destined for the store operated calcium entry pathway (SOCE). The chain is GRAM domain-containing protein 2A from Mus musculus (Mouse).